The chain runs to 476 residues: Cysteine--tRNA ligase (476 aa).

Cys36 is a binding site for Zn(2+). Residues 38-48 carry the 'HIGH' region motif; the sequence is PTVYDYAHIGN. Zn(2+)-binding residues include Cys221, His246, and Glu250. The 'KMSKS' region signature appears at 278–282; sequence KMSKS. Lys281 contacts ATP.

This sequence belongs to the class-I aminoacyl-tRNA synthetase family. Monomer. Zn(2+) is required as a cofactor.

It localises to the cytoplasm. It catalyses the reaction tRNA(Cys) + L-cysteine + ATP = L-cysteinyl-tRNA(Cys) + AMP + diphosphate. The chain is Cysteine--tRNA ligase from Chlamydia abortus (strain DSM 27085 / S26/3) (Chlamydophila abortus).